The primary structure comprises 272 residues: Ribosomal RNA small subunit methyltransferase A (272 aa).

The S-adenosyl-L-methionine site is built by H13, L15, G40, E61, D85, and N105.

Belongs to the class I-like SAM-binding methyltransferase superfamily. rRNA adenine N(6)-methyltransferase family. RsmA subfamily.

It is found in the cytoplasm. It catalyses the reaction adenosine(1518)/adenosine(1519) in 16S rRNA + 4 S-adenosyl-L-methionine = N(6)-dimethyladenosine(1518)/N(6)-dimethyladenosine(1519) in 16S rRNA + 4 S-adenosyl-L-homocysteine + 4 H(+). Functionally, specifically dimethylates two adjacent adenosines (A1518 and A1519) in the loop of a conserved hairpin near the 3'-end of 16S rRNA in the 30S particle. May play a critical role in biogenesis of 30S subunits. The sequence is that of Ribosomal RNA small subunit methyltransferase A from Bacteroides fragilis (strain ATCC 25285 / DSM 2151 / CCUG 4856 / JCM 11019 / LMG 10263 / NCTC 9343 / Onslow / VPI 2553 / EN-2).